The following is a 120-amino-acid chain: Large ribosomal subunit protein uL29 (120 aa).

The protein belongs to the universal ribosomal protein uL29 family. In terms of assembly, component of the large ribosomal subunit. Mature ribosomes consist of a small (40S) and a large (60S) subunit. The 40S subunit contains about 32 different proteins and 1 molecule of RNA (18S). The 60S subunit contains 45 different proteins and 3 molecules of RNA (25S, 5.8S and 5S).

The protein resides in the cytoplasm. Component of the ribosome, a large ribonucleoprotein complex responsible for the synthesis of proteins in the cell. The small ribosomal subunit (SSU) binds messenger RNAs (mRNAs) and translates the encoded message by selecting cognate aminoacyl-transfer RNA (tRNA) molecules. The large subunit (LSU) contains the ribosomal catalytic site termed the peptidyl transferase center (PTC), which catalyzes the formation of peptide bonds, thereby polymerizing the amino acids delivered by tRNAs into a polypeptide chain. The nascent polypeptides leave the ribosome through a tunnel in the LSU and interact with protein factors that function in enzymatic processing, targeting, and the membrane insertion of nascent chains at the exit of the ribosomal tunnel. The protein is Large ribosomal subunit protein uL29 of Candida albicans (strain SC5314 / ATCC MYA-2876) (Yeast).